The sequence spans 437 residues: Putative ABC transporter ATP-binding protein CTC_00753 (437 aa).

2 ABC transporter domains span residues 1–143 and 179–416; these read MERE…LPTI and LKFK…QISK. Residue 219–226 participates in ATP binding; that stretch reads GENGAGKS.

The protein belongs to the ABC transporter superfamily.

The protein localises to the cell membrane. Its function is as follows. Probably part of an ABC transporter complex. Responsible for energy coupling to the transport system. This chain is Putative ABC transporter ATP-binding protein CTC_00753, found in Clostridium tetani (strain Massachusetts / E88).